The following is a 298-amino-acid chain: N-acetylmuramic acid 6-phosphate etherase (298 aa).

Residues 55-218 form the SIS domain; it reads IHAQVSGGGR…STGLMIKSGK (164 aa). Glu83 (proton donor) is an active-site residue. The active site involves Glu114.

It belongs to the GCKR-like family. MurNAc-6-P etherase subfamily. As to quaternary structure, homodimer.

The enzyme catalyses N-acetyl-D-muramate 6-phosphate + H2O = N-acetyl-D-glucosamine 6-phosphate + (R)-lactate. It functions in the pathway amino-sugar metabolism; 1,6-anhydro-N-acetylmuramate degradation. It participates in amino-sugar metabolism; N-acetylmuramate degradation. The protein operates within cell wall biogenesis; peptidoglycan recycling. In terms of biological role, specifically catalyzes the cleavage of the D-lactyl ether substituent of MurNAc 6-phosphate, producing GlcNAc 6-phosphate and D-lactate. Together with AnmK, is also required for the utilization of anhydro-N-acetylmuramic acid (anhMurNAc) either imported from the medium or derived from its own cell wall murein, and thus plays a role in cell wall recycling. The chain is N-acetylmuramic acid 6-phosphate etherase from Escherichia coli (strain SMS-3-5 / SECEC).